The following is a 470-amino-acid chain: 5-hydroxytryptamine receptor 2A (470 aa).

A disordered region spans residues methionine 1–glycine 23. Residues methionine 1–leucine 80 lie on the Extracellular side of the membrane. Residues proline 10 to serine 21 are compositionally biased toward low complexity. Asparagine 38, asparagine 44, asparagine 51, and asparagine 54 each carry an N-linked (GlcNAc...) asparagine glycan. Residues threonine 81–methionine 97 traverse the membrane as a helical segment. Residues alanine 98 to tyrosine 111 lie on the Cytoplasmic side of the membrane. Residues phenylalanine 112–tyrosine 137 form a helical membrane-spanning segment. The Extracellular segment spans residues glycine 138–lysine 146. A helical membrane pass occupies residues leucine 147–leucine 171. Residues cysteine 148 and cysteine 227 are joined by a disulfide bond. A serotonin-binding site is contributed by aspartate 155. Positions aspartate 172–tyrosine 174 match the DRY motif; important for ligand-induced conformation changes motif. Over aspartate 172–lysine 191 the chain is Cytoplasmic. A helical membrane pass occupies residues alanine 192–leucine 215. Over glutamine 216–aspartate 232 the chain is Extracellular. The chain crosses the membrane as a helical span at residues asparagine 233 to isoleucine 258. At lysine 259–cysteine 321 the chain is on the cytoplasmic side. Serine 280 carries the phosphoserine modification. Residues lysine 322–isoleucine 347 form a helical membrane-spanning segment. Asparagine 342 is a serotonin binding site. Cysteines 348 and 352 form a disulfide. Residues cysteine 348–aspartate 355 lie on the Extracellular side of the membrane. A helical transmembrane segment spans residues isoleucine 356–leucine 381. Residues asparagine 375 to tyrosine 379 carry the NPxxY motif; important for ligand-induced conformation changes and signaling motif. At phenylalanine 382 to valine 470 the chain is on the cytoplasmic side. The PDZ-binding signature appears at serine 468–valine 470.

The protein belongs to the G-protein coupled receptor 1 family. In terms of assembly, interacts (via C-terminus) with MPDZ and PATJ. May interact (via C-terminus) with MPP3, PRDX6, DLG4, DLG1, CASK, APBA1 and MAGI2. Interacts with GRM2 and DRD2; this may affect signaling. In terms of tissue distribution, ubiquitous.

Its subcellular location is the cell membrane. It localises to the cell projection. The protein localises to the dendrite. It is found in the axon. The protein resides in the cytoplasmic vesicle. Its subcellular location is the membrane. It localises to the caveola. The protein localises to the presynapse. Its activity is regulated as follows. G-protein coupled receptor activity is regulated by lipids: oleamide increases HTR2A-mediated activity. Its function is as follows. G-protein coupled receptor for 5-hydroxytryptamine (serotonin). Also functions as a receptor for various drugs and psychoactive substances, including mescaline, psilocybin, 1-(2,5-dimethoxy-4-iodophenyl)-2-aminopropane (DOI) and lysergic acid diethylamide (LSD). Ligand binding causes a conformation change that triggers signaling via guanine nucleotide-binding proteins (G proteins) and modulates the activity of downstream effectors. HTR2A is coupled to G(q)/G(11) G alpha proteins and activates phospholipase C-beta, releasing diacylglycerol (DAG) and inositol 1,4,5-trisphosphate (IP3) second messengers that modulate the activity of phosphatidylinositol 3-kinase and promote the release of Ca(2+) ions from intracellular stores, respectively. Beta-arrestin family members inhibit signaling via G proteins and mediate activation of alternative signaling pathways. Affects neural activity, perception, cognition and mood. Plays a role in the regulation of behavior, including responses to anxiogenic situations and psychoactive substances. Plays a role in intestinal smooth muscle contraction, and may play a role in arterial vasoconstriction. The chain is 5-hydroxytryptamine receptor 2A (HTR2A) from Canis lupus familiaris (Dog).